Reading from the N-terminus, the 1286-residue chain is DNA-directed RNA polymerase 147 kDa polypeptide (1286 aa).

It belongs to the poxviridae DNA-directed RNA polymerase 147 kDa subunit family. The DNA-dependent RNA polymerase used for intermediate and late genes expression consists of eight subunits Rpo30/OPG66, Rpo7/OPG90, Rpo22/OPG103, Rpo147/OPG105, Rpo18/OPG119, Rpo19/OPG131, Rpo132/OPG151 and Rpo35/OPG156. The same holoenzyme, with the addition of the transcription-specificity factor OPG109, is used for early gene expression.

Its subcellular location is the virion. The catalysed reaction is RNA(n) + a ribonucleoside 5'-triphosphate = RNA(n+1) + diphosphate. Its function is as follows. Part of the DNA-dependent RNA polymerase which catalyzes the transcription of viral DNA into RNA using the four ribonucleoside triphosphates as substrates. Responsible for the transcription of early, intermediate and late genes. DNA-dependent RNA polymerase associates with the early transcription factor (ETF), itself composed of OPG118 and OPG133, thereby allowing the early genes transcription. Late transcription, and probably also intermediate transcription, require newly synthesized RNA polymerase. This is DNA-directed RNA polymerase 147 kDa polypeptide (OPG105) from Variola virus (isolate Human/India/Ind3/1967) (VARV).